The chain runs to 138 residues: Small ribosomal subunit protein uS11 (138 aa).

The segment covering 1–12 (MPPAKKAAAAPK) has biased composition (low complexity). A disordered region spans residues 1 to 27 (MPPAKKAAAAPKKGQKTRRREKKNVPH). Over residues 13-22 (KGQKTRRREK) the composition is skewed to basic residues.

The protein belongs to the universal ribosomal protein uS11 family. Part of the 30S ribosomal subunit. Interacts with proteins S7 and S18. Binds to IF-3.

Its function is as follows. Located on the platform of the 30S subunit, it bridges several disparate RNA helices of the 16S rRNA. Forms part of the Shine-Dalgarno cleft in the 70S ribosome. The chain is Small ribosomal subunit protein uS11 from Mycolicibacterium paratuberculosis (strain ATCC BAA-968 / K-10) (Mycobacterium paratuberculosis).